The following is a 58-amino-acid chain: Large ribosomal subunit protein eL37 (58 aa).

Zn(2+) is bound by residues Cys20, Cys23, Cys35, and Cys38. The segment at Cys20–Cys38 adopts a C4-type zinc-finger fold.

It belongs to the eukaryotic ribosomal protein eL37 family. Zn(2+) is required as a cofactor.

Its function is as follows. Binds to the 23S rRNA. This Haloquadratum walsbyi (strain DSM 16790 / HBSQ001) protein is Large ribosomal subunit protein eL37.